Here is a 149-residue protein sequence, read N- to C-terminus: Glycine cleavage system H protein (149 aa).

Residues 23-104 (LIWVGISNHA…PYGIWLFKIN (82 aa)) enclose the Lipoyl-binding domain. K64 is modified (N6-lipoyllysine).

The protein belongs to the GcvH family. The glycine cleavage system is composed of four proteins: P, T, L and H. The cofactor is (R)-lipoate.

In terms of biological role, the glycine cleavage system catalyzes the degradation of glycine. The H protein shuttles the methylamine group of glycine from the P protein to the T protein. This Polynucleobacter necessarius subsp. necessarius (strain STIR1) protein is Glycine cleavage system H protein.